Here is a 475-residue protein sequence, read N- to C-terminus: MSTPANGKGRISQVIGAVVDVEFDGELPSILNALETFNNGSRLVLEVAQHLGENTVRTIAMDSTEGLVRGQPVSDIGTPITVPVGPATLGRIMNVIGEPIDERGPVNADTYMPIHAQAPAFVDQATESEVLVTGIKVIDLLCPYAKGGKIGLFGGAGVGKTVLIMELVNNIAKLFGGYSVFAGVGERTREGNDLYHEMIESNVINLEGESRMSLVYGQMNEPPGARARVALTGLTQAEYFRDVEGKDVLFFVDNIFRFTQAGSEVSALLGRIPSAVGYQPTLATDMGALQERITSTNKGSITSVQAVYVPADDLTDPAPATSFAHLDATTVLNRAISEKGIYPAVDPLDSTSRILDPMVVGEEHYEVARGVQQILQKYKELQDIIAILGMDELSEDDKVTVARARKVERFLSQPFDVAQVFTGSPGVQVKLEDTIKGFKGLISGEFDHLPEPAFYMVGNIEEAKAKAAKLMADAA.

154–161 lines the ATP pocket; it reads GGAGVGKT.

Belongs to the ATPase alpha/beta chains family. As to quaternary structure, F-type ATPases have 2 components, CF(1) - the catalytic core - and CF(0) - the membrane proton channel. CF(1) has five subunits: alpha(3), beta(3), gamma(1), delta(1), epsilon(1). CF(0) has three main subunits: a(1), b(2) and c(9-12). The alpha and beta chains form an alternating ring which encloses part of the gamma chain. CF(1) is attached to CF(0) by a central stalk formed by the gamma and epsilon chains, while a peripheral stalk is formed by the delta and b chains.

Its subcellular location is the cell inner membrane. It catalyses the reaction ATP + H2O + 4 H(+)(in) = ADP + phosphate + 5 H(+)(out). Its function is as follows. Produces ATP from ADP in the presence of a proton gradient across the membrane. The catalytic sites are hosted primarily by the beta subunits. The sequence is that of ATP synthase subunit beta from Hyphomonas neptunium (strain ATCC 15444).